We begin with the raw amino-acid sequence, 293 residues long: Homoserine kinase (293 aa).

ATP is bound at residue 84–94 (PLSRGLGSSSA).

The protein belongs to the GHMP kinase family. Homoserine kinase subfamily.

Its subcellular location is the cytoplasm. It carries out the reaction L-homoserine + ATP = O-phospho-L-homoserine + ADP + H(+). It functions in the pathway amino-acid biosynthesis; L-threonine biosynthesis; L-threonine from L-aspartate: step 4/5. Catalyzes the ATP-dependent phosphorylation of L-homoserine to L-homoserine phosphate. This chain is Homoserine kinase, found in Nautilia profundicola (strain ATCC BAA-1463 / DSM 18972 / AmH).